Consider the following 191-residue polypeptide: dCTP deaminase, dUMP-forming (191 aa).

Residues 101-106 (KSSLGR), D119, 127-129 (TLE), Q148, Y162, and Q174 contribute to the dCTP site. The Proton donor/acceptor role is filled by E129.

This sequence belongs to the dCTP deaminase family. As to quaternary structure, homotrimer.

It catalyses the reaction dCTP + 2 H2O = dUMP + NH4(+) + diphosphate. It participates in pyrimidine metabolism; dUMP biosynthesis; dUMP from dCTP: step 1/1. Its function is as follows. Bifunctional enzyme that catalyzes both the deamination of dCTP to dUTP and the hydrolysis of dUTP to dUMP without releasing the toxic dUTP intermediate. In Streptomyces coelicolor (strain ATCC BAA-471 / A3(2) / M145), this protein is dCTP deaminase, dUMP-forming.